The following is a 98-amino-acid chain: Putative defensin-like protein 233 (98 aa).

A signal peptide spans 1–28; sequence MGMWCTTLFMVSCVSICLILSHVQEVEA. 4 cysteine pairs are disulfide-bonded: Cys-35/Cys-96, Cys-45/Cys-70, Cys-53/Cys-86, and Cys-68/Cys-88.

Belongs to the DEFL family. Expressed at least in stem, root, rosette leaves and flower buds.

It localises to the secreted. This chain is Putative defensin-like protein 233 (SCRL22), found in Arabidopsis thaliana (Mouse-ear cress).